A 157-amino-acid polypeptide reads, in one-letter code: MLFTTFVSLLLVILCLVHVSAHPLQSFRSSSAIGKQKHKIKSRQFEEEIAQGAEDSIELFEFPRVHDSSEQIHERTEQQNITTKNIILAINKNSRKHGGLHRLPAQVQGEGEFTYDRQRNAVGSYRYGDSHGNSREAEYSVADHQSASGEYKFGPTT.

The N-terminal stretch at 1-21 (MLFTTFVSLLLVILCLVHVSA) is a signal peptide. The tract at residues 124–157 (SYRYGDSHGNSREAEYSVADHQSASGEYKFGPTT) is disordered. Residues 128–138 (GDSHGNSREAE) show a composition bias toward basic and acidic residues.

Interacts with a maize homolog of SGT1, a factor acting in cell cycle progression in yeast Saccharomyces cerevisiae and an important component of plant and human innate immunity.

The protein localises to the secreted. The protein resides in the host cytoplasm. It localises to the host nucleus. Its function is as follows. Effector protein involved in the induction of tumors in infected plant tissues by the fungus. Required for the reactivation of plant DNA synthesis, which is crucial for tumor progression in leaf cells. Interferes with the MAPK-triggered phosphorylation of maize SGT1 at a monocot-specific phosphorylation site, resulting in both modulation of immune responses and reactivation of DNA synthesis during leaf tumor formation. In Mycosarcoma maydis (Corn smut fungus), this protein is Secreted effector protein See1.